A 376-amino-acid polypeptide reads, in one-letter code: Actin-related protein T1 (376 aa).

The protein belongs to the actin family.

Its subcellular location is the cytoplasm. The protein resides in the cytoskeleton. The protein localises to the nucleus. It localises to the cytoplasmic vesicle. It is found in the secretory vesicle. Its subcellular location is the acrosome. Its function is as follows. Negatively regulates the Hedgehog (SHH) signaling. Binds to the promoter of the SHH signaling mediator, GLI1, and inhibits its expression. This chain is Actin-related protein T1 (Actrt1), found in Rattus norvegicus (Rat).